The chain runs to 161 residues: uncharacterized protein (161 aa).

Disordered regions lie at residues 1–67 (MNSN…IQNF) and 80–147 (DSHQ…KKKQ). Over residues 84-126 (NFNDNGFNNNNNNNNSNMNHNFSNQNNYNNNNNNNNNNNSNFN) the composition is skewed to low complexity. Positions 135–147 (GTSSQVGNNKKKQ) are enriched in polar residues.

This is an uncharacterized protein from Dictyostelium discoideum (Social amoeba).